The chain runs to 345 residues: N-acetyl-gamma-glutamyl-phosphate reductase (345 aa).

Residue cysteine 149 is part of the active site.

The protein belongs to the NAGSA dehydrogenase family. Type 1 subfamily.

It localises to the cytoplasm. The catalysed reaction is N-acetyl-L-glutamate 5-semialdehyde + phosphate + NADP(+) = N-acetyl-L-glutamyl 5-phosphate + NADPH + H(+). It functions in the pathway amino-acid biosynthesis; L-arginine biosynthesis; N(2)-acetyl-L-ornithine from L-glutamate: step 3/4. Catalyzes the NADPH-dependent reduction of N-acetyl-5-glutamyl phosphate to yield N-acetyl-L-glutamate 5-semialdehyde. This is N-acetyl-gamma-glutamyl-phosphate reductase from Bacillus cereus (strain B4264).